The following is a 231-amino-acid chain: 7-cyano-7-deazaguanine synthase (231 aa).

An ATP-binding site is contributed by 8 to 18; that stretch reads FSGGQDSTTCL. Zn(2+) is bound by residues Cys-188, Cys-197, Cys-200, and Cys-203.

The protein belongs to the QueC family. The cofactor is Zn(2+).

The catalysed reaction is 7-carboxy-7-deazaguanine + NH4(+) + ATP = 7-cyano-7-deazaguanine + ADP + phosphate + H2O + H(+). Its pathway is purine metabolism; 7-cyano-7-deazaguanine biosynthesis. Catalyzes the ATP-dependent conversion of 7-carboxy-7-deazaguanine (CDG) to 7-cyano-7-deazaguanine (preQ(0)). In Salmonella paratyphi B (strain ATCC BAA-1250 / SPB7), this protein is 7-cyano-7-deazaguanine synthase.